The following is a 247-amino-acid chain: NifU-like scaffold protein (247 aa).

This sequence belongs to the NifU family. Homodimer.

The protein localises to the plastid. Its subcellular location is the apicoplast. It participates in cofactor biosynthesis; iron-sulfur cluster biosynthesis. Its function is as follows. Binds and transfers [4Fe-4S] iron-sulfur clusters to target proteins. The sequence is that of NifU-like scaffold protein from Plasmodium falciparum (isolate 3D7).